The chain runs to 752 residues: Probable GTP-binding protein OBGC1, chloroplastic (752 aa).

The N-terminal 90 residues, 1–90, are a transit peptide targeting the chloroplast; it reads MAPAVAVVAA…RFPTANPEPR (90 aa). The tract at residues 19 to 121 is disordered; the sequence is FSAEARRNTK…EEDEVELGLR (103 aa). Over residues 26–36 the composition is skewed to basic residues; it reads NTKGSRSKRGS. Positions 103–117 are enriched in acidic residues; that stretch reads GDDEEDEEEEEDEVE. The Obg domain maps to 294 to 452; it reads MRCFDTAKIY…MWIDLELKLV (159 aa). Residues 453–621 form the OBG-type G domain; that stretch reads ADVGIVGAPN…VVLAAYKVLQ (169 aa). GTP-binding positions include 459–466, 484–488, 506–509, 573–576, and 602–604; these read GAPNAGKS, FTTLL, DLPG, NKMD, and SAM. The Mg(2+) site is built by Ser466 and Thr486. The OCT domain maps to 649 to 728; that stretch reads ERRAPMNEFE…VGEMEMVWTD (80 aa). A disordered region spans residues 728–752; sequence DEPSKTRSSKTMNSKDDSVRWPEFG. Over residues 740 to 752 the composition is skewed to basic and acidic residues; it reads NSKDDSVRWPEFG.

It belongs to the TRAFAC class OBG-HflX-like GTPase superfamily. OBG GTPase family. Mg(2+) is required as a cofactor.

Its subcellular location is the plastid. It is found in the chloroplast. Functionally, probable GTP-binding protein that may play a role in chloroplast development. The polypeptide is Probable GTP-binding protein OBGC1, chloroplastic (OBGC1) (Oryza sativa subsp. indica (Rice)).